Consider the following 398-residue polypeptide: Argininosuccinate synthase (398 aa).

Position 8–16 (8–16 (AYSGGLDTS)) interacts with ATP. Residue Tyr-87 participates in L-citrulline binding. Gly-117 provides a ligand contact to ATP. 3 residues coordinate L-aspartate: Thr-119, Asn-123, and Asp-124. Asn-123 is a binding site for L-citrulline. Residues Arg-127, Ser-175, Glu-260, and Tyr-272 each contribute to the L-citrulline site.

It belongs to the argininosuccinate synthase family. Type 1 subfamily. In terms of assembly, homotetramer.

The protein resides in the cytoplasm. It catalyses the reaction L-citrulline + L-aspartate + ATP = 2-(N(omega)-L-arginino)succinate + AMP + diphosphate + H(+). The protein operates within amino-acid biosynthesis; L-arginine biosynthesis; L-arginine from L-ornithine and carbamoyl phosphate: step 2/3. The sequence is that of Argininosuccinate synthase from Mycobacterium tuberculosis (strain ATCC 25618 / H37Rv).